Reading from the N-terminus, the 140-residue chain is Small ribosomal subunit protein uS12m (140 aa).

Belongs to the universal ribosomal protein uS12 family.

The protein localises to the mitochondrion. The polypeptide is Small ribosomal subunit protein uS12m (mrps12) (Dictyostelium citrinum (Slime mold)).